Here is a 441-residue protein sequence, read N- to C-terminus: Amino-acid acetyltransferase (441 aa).

The region spanning 295 to 434 is the N-acetyltransferase domain; sequence EQVRRATIND…QELYNYQRRS (140 aa).

This sequence belongs to the acetyltransferase family. ArgA subfamily. In terms of assembly, homohexamer.

The protein localises to the cytoplasm. The catalysed reaction is L-glutamate + acetyl-CoA = N-acetyl-L-glutamate + CoA + H(+). It functions in the pathway amino-acid biosynthesis; L-arginine biosynthesis; N(2)-acetyl-L-ornithine from L-glutamate: step 1/4. In Yersinia pseudotuberculosis serotype O:1b (strain IP 31758), this protein is Amino-acid acetyltransferase.